A 248-amino-acid chain; its full sequence is Probable transcriptional regulatory protein RHE_CH03475 (248 aa).

Belongs to the TACO1 family.

Its subcellular location is the cytoplasm. The protein is Probable transcriptional regulatory protein RHE_CH03475 of Rhizobium etli (strain ATCC 51251 / DSM 11541 / JCM 21823 / NBRC 15573 / CFN 42).